The following is a 273-amino-acid chain: NADPH-dependent 7-cyano-7-deazaguanine reductase (273 aa).

Position 80–82 (80–82) interacts with substrate; the sequence is VES. Residue 82-83 coordinates NADPH; the sequence is SK. The active-site Thioimide intermediate is C180. Residue D187 is the Proton donor of the active site. 219-220 lines the substrate pocket; the sequence is HE. Residue 248–249 coordinates NADPH; the sequence is RG.

Belongs to the GTP cyclohydrolase I family. QueF type 2 subfamily. Homodimer.

The protein localises to the cytoplasm. It catalyses the reaction 7-aminomethyl-7-carbaguanine + 2 NADP(+) = 7-cyano-7-deazaguanine + 2 NADPH + 3 H(+). The protein operates within tRNA modification; tRNA-queuosine biosynthesis. Functionally, catalyzes the NADPH-dependent reduction of 7-cyano-7-deazaguanine (preQ0) to 7-aminomethyl-7-deazaguanine (preQ1). The protein is NADPH-dependent 7-cyano-7-deazaguanine reductase of Bordetella pertussis (strain Tohama I / ATCC BAA-589 / NCTC 13251).